The following is an 87-amino-acid chain: Pyocin-S2 immunity protein (87 aa).

Belongs to the colicins ColE2/ColE8/ColE9 and pyocins S1/S2 family.

The protein is Pyocin-S2 immunity protein (imm2) of Pseudomonas aeruginosa (strain ATCC 15692 / DSM 22644 / CIP 104116 / JCM 14847 / LMG 12228 / 1C / PRS 101 / PAO1).